The chain runs to 396 residues: Chaperone protein DnaJ (396 aa).

Positions 6-71 (DYYEVLEVTK…DKRSRYDQFG (66 aa)) constitute a J domain. The CR-type zinc finger occupies 154-236 (GVEKKFKLKK…CGGDGIVYGE (83 aa)). Cys167, Cys170, Cys184, Cys187, Cys210, Cys213, Cys224, and Cys227 together coordinate Zn(2+). CXXCXGXG motif repeat units follow at residues 167–174 (CNHCHGTG), 184–191 (CPTCKGSG), 210–217 (CPTCNGEG), and 224–231 (CKECGGDG).

It belongs to the DnaJ family. Homodimer. Zn(2+) is required as a cofactor.

The protein resides in the cytoplasm. Its function is as follows. Participates actively in the response to hyperosmotic and heat shock by preventing the aggregation of stress-denatured proteins and by disaggregating proteins, also in an autonomous, DnaK-independent fashion. Unfolded proteins bind initially to DnaJ; upon interaction with the DnaJ-bound protein, DnaK hydrolyzes its bound ATP, resulting in the formation of a stable complex. GrpE releases ADP from DnaK; ATP binding to DnaK triggers the release of the substrate protein, thus completing the reaction cycle. Several rounds of ATP-dependent interactions between DnaJ, DnaK and GrpE are required for fully efficient folding. Also involved, together with DnaK and GrpE, in the DNA replication of plasmids through activation of initiation proteins. This is Chaperone protein DnaJ from Bacteroides thetaiotaomicron (strain ATCC 29148 / DSM 2079 / JCM 5827 / CCUG 10774 / NCTC 10582 / VPI-5482 / E50).